The chain runs to 65 residues: Large ribosomal subunit protein uL29 (65 aa).

Belongs to the universal ribosomal protein uL29 family.

This is Large ribosomal subunit protein uL29 from Buchnera aphidicola subsp. Schizaphis graminum (strain Sg).